Reading from the N-terminus, the 1769-residue chain is Gamma-tubulin complex component 6 (1769 aa).

3 disordered regions span residues 809-842, 859-881, and 1284-1360; these read EAQQ…HSCD, STPS…PFST, and TVCS…AEAR. The segment covering 820–831 has biased composition (polar residues); it reads FPSTGSQVTSTG. A compositionally biased stretch (basic and acidic residues) spans 1314-1326; the sequence is PEEKGPGKSRDAE. Over residues 1332-1343 the composition is skewed to polar residues; the sequence is LPSSSQEDTAVP.

The protein belongs to the TUBGCP family. In terms of assembly, component of the gamma-tubulin ring complex (gTuRC) consisting of TUBGCP2, TUBGCP3, TUBGCP4, TUBGCP5 and TUBGCP6 and gamma-tubulin TUBG1 or TUBG2. TUBGCP2, TUBGCP3, TUBGCP4, TUBGCP5 and TUBGCP6 assemble in a 5:5:2:1:1 stoichiometry; each is associated with a gamma-tubulin, thereby arranging 14 gamma-tubulins in a helical manner. Gamma-tubulin at the first position is blocked by TUBGCP3 at the last position, allowing 13 protafilaments to grow into a microtubule. The gTuRC (via TUBGCP3 and TUBGCP6) interacts with ACTB and MZT1; the interactions form a luminal bridge that stabilizes the initial structure during complex assembly. The gTuRC (via TUBGCP2) interacts with MZT2A/MZT2B and CDK5RAP2 (via CM1 motif); the interactions play a role in gTuRC activation.

The protein localises to the cytoplasm. It is found in the cytoskeleton. The protein resides in the microtubule organizing center. It localises to the centrosome. Component of the gamma-tubulin ring complex (gTuRC) which mediates microtubule nucleation. The gTuRC regulates the minus-end nucleation of alpha-beta tubulin heterodimers that grow into microtubule protafilaments, a critical step in centrosome duplication and spindle formation. This is Gamma-tubulin complex component 6 (Tubgcp6) from Mus musculus (Mouse).